The sequence spans 722 residues: Putative tyrosine-protein kinase in cps region (722 aa).

Transmembrane regions (helical) follow at residues 31–53 (IIIA…ATPI) and 427–449 (IVVL…VRIL).

It belongs to the etk/wzc family. Post-translationally, autophosphorylated on tyrosine residue(s).

It localises to the cell inner membrane. It catalyses the reaction L-tyrosyl-[protein] + ATP = O-phospho-L-tyrosyl-[protein] + ADP + H(+). The protein operates within glycan metabolism; exopolysaccharide biosynthesis. The sequence is that of Putative tyrosine-protein kinase in cps region from Klebsiella pneumoniae.